We begin with the raw amino-acid sequence, 183 residues long: Adenine phosphoribosyltransferase (183 aa).

It belongs to the purine/pyrimidine phosphoribosyltransferase family. In terms of assembly, homodimer.

The protein localises to the cytoplasm. The enzyme catalyses AMP + diphosphate = 5-phospho-alpha-D-ribose 1-diphosphate + adenine. Its pathway is purine metabolism; AMP biosynthesis via salvage pathway; AMP from adenine: step 1/1. Its function is as follows. Catalyzes a salvage reaction resulting in the formation of AMP, that is energically less costly than de novo synthesis. This is Adenine phosphoribosyltransferase from Klebsiella pneumoniae (strain 342).